Here is a 372-residue protein sequence, read N- to C-terminus: MQHESPIIRRKSTRIYVGDVPIGDGAPIAVQSMTNTRTTDVEATVAQIRALEKVGADIVRVSVPTMDAAEAFKLIKQQVSVPLVADIHFDYRIALKVAEYGVDCLRINPGNIGNEERIRSVVDCARDKNIPIRIGVNGGSLEKDLQMKYGEPTPEALVESAMRHVDHLDRLNFDQFKVSVKASDVFLAVDSYRLLAKQIDQPLHLGITEAGGARAGAVKSSVGLGMLLAEGIGDTLRISLAADPVEEIKVGFDILKSLRIRSRGINFIACPSCSRQEFDVINTVNALEERLEDIITPMDVSIIGCVVNGPGEAEVSHLGLAGSNKKSAFYEDGKRQKERFDNDDLVNQLEAKIRAKASVLDQANRIDIKQED.

Residues Cys270, Cys273, Cys305, and Glu312 each coordinate [4Fe-4S] cluster.

The protein belongs to the IspG family. Requires [4Fe-4S] cluster as cofactor.

The catalysed reaction is (2E)-4-hydroxy-3-methylbut-2-enyl diphosphate + oxidized [flavodoxin] + H2O + 2 H(+) = 2-C-methyl-D-erythritol 2,4-cyclic diphosphate + reduced [flavodoxin]. It participates in isoprenoid biosynthesis; isopentenyl diphosphate biosynthesis via DXP pathway; isopentenyl diphosphate from 1-deoxy-D-xylulose 5-phosphate: step 5/6. Its function is as follows. Converts 2C-methyl-D-erythritol 2,4-cyclodiphosphate (ME-2,4cPP) into 1-hydroxy-2-methyl-2-(E)-butenyl 4-diphosphate. This Vibrio campbellii (strain ATCC BAA-1116) protein is 4-hydroxy-3-methylbut-2-en-1-yl diphosphate synthase (flavodoxin).